Here is a 251-residue protein sequence, read N- to C-terminus: Hydroxyacylglutathione hydrolase (251 aa).

Zn(2+) contacts are provided by His55, His57, Asp59, His60, His112, Asp131, and His169.

This sequence belongs to the metallo-beta-lactamase superfamily. Glyoxalase II family. Monomer. It depends on Zn(2+) as a cofactor.

It catalyses the reaction an S-(2-hydroxyacyl)glutathione + H2O = a 2-hydroxy carboxylate + glutathione + H(+). The protein operates within secondary metabolite metabolism; methylglyoxal degradation; (R)-lactate from methylglyoxal: step 2/2. Functionally, thiolesterase that catalyzes the hydrolysis of S-D-lactoyl-glutathione to form glutathione and D-lactic acid. This is Hydroxyacylglutathione hydrolase from Erythrobacter litoralis (strain HTCC2594).